Here is a 388-residue protein sequence, read N- to C-terminus: Diphosphomevalonate decarboxylase (388 aa).

Residues 19 to 22 (YWGK), Arg-74, 153 to 158 (SGSACR), and Thr-209 each bind (R)-5-diphosphomevalonate. Positions 367–388 (QGPQGSSESLINDKGLPKAVAN) are disordered.

This sequence belongs to the diphosphomevalonate decarboxylase family. In terms of assembly, homodimer.

It carries out the reaction (R)-5-diphosphomevalonate + ATP = isopentenyl diphosphate + ADP + phosphate + CO2. It participates in isoprenoid biosynthesis; isopentenyl diphosphate biosynthesis via mevalonate pathway; isopentenyl diphosphate from (R)-mevalonate: step 3/3. Its function is as follows. Diphosphomevalonate decarboxylase; part of the second module of ergosterol biosynthesis pathway that includes the middle steps of the pathway. The second module is carried out in the vacuole and involves the formation of farnesyl diphosphate, which is also an important intermediate in the biosynthesis of ubiquinone, dolichol, heme and prenylated proteins. Activity by the mevalonate kinase ERG12 first converts mevalonate into 5-phosphomevalonate. 5-phosphomevalonate is then further converted to 5-diphosphomevalonate by the phosphomevalonate kinase ERG8. The diphosphomevalonate decarboxylase MVD1/ERG19 then produces isopentenyl diphosphate. The isopentenyl-diphosphate delta-isomerase IDI1 then catalyzes the 1,3-allylic rearrangement of the homoallylic substrate isopentenyl (IPP) to its highly electrophilic allylic isomer, dimethylallyl diphosphate (DMAPP). Finally the farnesyl diphosphate synthase ERG20 catalyzes the sequential condensation of isopentenyl pyrophosphate with dimethylallyl pyrophosphate, and then with the resultant geranylpyrophosphate to the ultimate product farnesyl pyrophosphate. This is Diphosphomevalonate decarboxylase from Debaryomyces hansenii (strain ATCC 36239 / CBS 767 / BCRC 21394 / JCM 1990 / NBRC 0083 / IGC 2968) (Yeast).